The primary structure comprises 578 residues: Acyl-coenzyme A synthetase ACSM5, mitochondrial (578 aa).

The N-terminal 22 residues, M1–I22, are a transit peptide targeting the mitochondrion. Position 96 is an N6-acetyllysine; alternate (K96). K96 carries the post-translational modification N6-succinyllysine; alternate. An N6-acetyllysine modification is found at K151. Residue T229–K237 participates in ATP binding. K335 is modified (N6-acetyllysine). ATP-binding positions include E367–S372, D454, R469, and K565.

This sequence belongs to the ATP-dependent AMP-binding enzyme family. Mg(2+) serves as cofactor. Requires Mn(2+) as cofactor.

It localises to the mitochondrion matrix. The catalysed reaction is a medium-chain fatty acid + ATP + CoA = a medium-chain fatty acyl-CoA + AMP + diphosphate. In terms of biological role, catalyzes the activation of fatty acids by CoA to produce an acyl-CoA, the first step in fatty acid metabolism. The polypeptide is Acyl-coenzyme A synthetase ACSM5, mitochondrial (Acsm5) (Rattus norvegicus (Rat)).